The following is a 359-amino-acid chain: Histidinol-phosphate aminotransferase (359 aa).

Residue Lys-212 is modified to N6-(pyridoxal phosphate)lysine.

This sequence belongs to the class-II pyridoxal-phosphate-dependent aminotransferase family. Histidinol-phosphate aminotransferase subfamily. As to quaternary structure, homodimer. It depends on pyridoxal 5'-phosphate as a cofactor.

The catalysed reaction is L-histidinol phosphate + 2-oxoglutarate = 3-(imidazol-4-yl)-2-oxopropyl phosphate + L-glutamate. The protein operates within amino-acid biosynthesis; L-histidine biosynthesis; L-histidine from 5-phospho-alpha-D-ribose 1-diphosphate: step 7/9. The polypeptide is Histidinol-phosphate aminotransferase (Buchnera aphidicola subsp. Melaphis rhois).